A 614-amino-acid chain; its full sequence is Numb-like protein (614 aa).

Disordered regions lie at residues 1–68, 223–283, 371–420, 448–468, and 539–614; these read MSRS…QWQA, GSFR…PVAA, FASA…LEEV, QQQQ…LQPF, and LGKA…EIEL. The 150-residue stretch at 74 to 223 folds into the PID domain; that stretch reads RKGTCSFPVR…ASRTSFAREG (150 aa). Phosphoserine occurs at positions 224 and 228. The segment covering 233 to 245 has biased composition (basic and acidic residues); the sequence is PAEREAGDKKKAE. Over residues 246-260 the composition is skewed to low complexity; the sequence is AAAAPAVAPGPAQPG. A Phosphoserine modification is found at S263. The residue at position 279 (T279) is a Phosphothreonine. Residues 371 to 390 are compositionally biased toward low complexity; the sequence is FASAGAPVPGPPSATTGTSA. The span at 409–418 shows a compositional bias: basic and acidic residues; that stretch reads TPSEAERWLE. S411 carries the phosphoserine modification. Residues 563–578 are compositionally biased toward pro residues; the sequence is NGAPWPPEPAPAPAPE.

In terms of assembly, associates with EPS15 and NOTCH1. Interacts (via PTB domain) with MAP3K7IP2 (via C-terminal). Interacts (via C-terminal) with TRAF6 (via TRAF domains).

The protein resides in the cytoplasm. Functionally, plays a role in the process of neurogenesis. Required throughout embryonic neurogenesis to maintain neural progenitor cells, also called radial glial cells (RGCs), by allowing their daughter cells to choose progenitor over neuronal cell fate. Not required for the proliferation of neural progenitor cells before the onset of embryonic neurogenesis. Also required postnatally in the subventricular zone (SVZ) neurogenesis by regulating SVZ neuroblasts survival and ependymal wall integrity. Negative regulator of NF-kappa-B signaling pathway. The inhibition of NF-kappa-B activation is mediated at least in part, by preventing MAP3K7IP2 to interact with polyubiquitin chains of TRAF6 and RIPK1 and by stimulating the 'Lys-48'-linked polyubiquitination and degradation of TRAF6 in cortical neurons. The protein is Numb-like protein (Numbl) of Rattus norvegicus (Rat).